We begin with the raw amino-acid sequence, 262 residues long: MIHETAKIHPAAVIEGDVTIGANVTVGPFTYIAGNVTIGDDTEVMSHVVIKGHTTIGKQNRIFPHAVIGEENQDKKYGGEDTTVVIGDRNVIREAVQIHRGTTQDKATTVIGDDNLLCVNAHVAHDVIVGNHTHIGNNAILGGHVTVGDYAGVMALSAIHPFCSIGAYAYIGGCSAVVQDVLPYVLAQGNHAAPFGLNLVGLKRNGFEKPEIRALQKAYKELYRSGKTLEEAKAALVEMAKEFASVTPMLEMLESSERGIIR.

The protein belongs to the transferase hexapeptide repeat family. LpxA subfamily. Homotrimer.

The protein resides in the cytoplasm. It carries out the reaction a (3R)-hydroxyacyl-[ACP] + UDP-N-acetyl-alpha-D-glucosamine = a UDP-3-O-[(3R)-3-hydroxyacyl]-N-acetyl-alpha-D-glucosamine + holo-[ACP]. The protein operates within glycolipid biosynthesis; lipid IV(A) biosynthesis; lipid IV(A) from (3R)-3-hydroxytetradecanoyl-[acyl-carrier-protein] and UDP-N-acetyl-alpha-D-glucosamine: step 1/6. In terms of biological role, involved in the biosynthesis of lipid A, a phosphorylated glycolipid that anchors the lipopolysaccharide to the outer membrane of the cell. In Vibrio atlanticus (strain LGP32) (Vibrio splendidus (strain Mel32)), this protein is Acyl-[acyl-carrier-protein]--UDP-N-acetylglucosamine O-acyltransferase.